We begin with the raw amino-acid sequence, 338 residues long: MTDHALLLVNLGSPDSPEVADVRRYLDQFLMDPYVIDLPWPLRRLLVSLILRKRPEQSAHAYASIWWPEGSPLIALSRRLQEAVQAHWHEGPVELAMRYGNLSIEAALNRLAEEGVRRVTLAPLYPQFADSTVTTVVEETRRVLRASGLTLELRVLEPFFARPEYLDALARSAGPHLQQGFDHLLLSFHGLPERHLRKADPSGRHCLGSADCCREAPVEVLARCYRAQCLRSAEGFARRMGLDEGRWSVSFQSRLGRARWISPYTEEQLDALAARGVKRLLVMCPAFVTDCIETLEEIGQRGREQFQAAGGEELILVPCLNDHPAWASALAQLCRTPG.

Fe cation contacts are provided by His189 and Glu293.

This sequence belongs to the ferrochelatase family.

It localises to the cytoplasm. It catalyses the reaction heme b + 2 H(+) = protoporphyrin IX + Fe(2+). It participates in porphyrin-containing compound metabolism; protoheme biosynthesis; protoheme from protoporphyrin-IX: step 1/1. Its function is as follows. Catalyzes the ferrous insertion into protoporphyrin IX. This is Ferrochelatase from Azotobacter vinelandii (strain DJ / ATCC BAA-1303).